A 95-amino-acid polypeptide reads, in one-letter code: Protein TusB (95 aa).

It belongs to the DsrH/TusB family. Heterohexamer, formed by a dimer of trimers. The hexameric TusBCD complex contains 2 copies each of TusB, TusC and TusD. The TusBCD complex interacts with TusE.

The protein localises to the cytoplasm. In terms of biological role, part of a sulfur-relay system required for 2-thiolation of 5-methylaminomethyl-2-thiouridine (mnm(5)s(2)U) at tRNA wobble positions. The polypeptide is Protein TusB (Escherichia fergusonii (strain ATCC 35469 / DSM 13698 / CCUG 18766 / IAM 14443 / JCM 21226 / LMG 7866 / NBRC 102419 / NCTC 12128 / CDC 0568-73)).